The chain runs to 122 residues: Large ribosomal subunit protein uL14 (122 aa).

The protein belongs to the universal ribosomal protein uL14 family. In terms of assembly, part of the 50S ribosomal subunit. Forms a cluster with proteins L3 and L19. In the 70S ribosome, L14 and L19 interact and together make contacts with the 16S rRNA in bridges B5 and B8.

Binds to 23S rRNA. Forms part of two intersubunit bridges in the 70S ribosome. In Leuconostoc citreum (strain KM20), this protein is Large ribosomal subunit protein uL14.